The sequence spans 353 residues: Photosystem II protein D1 (353 aa).

Position 2 is an N-acetylthreonine (T2). At T2 the chain carries Phosphothreonine. 3 helical membrane-spanning segments follow: residues 29–46 (YIGW…TATS), 118–133 (HFFL…EWEL), and 142–156 (WIAV…AATA). Residue H118 coordinates chlorophyll a. Position 126 (Y126) interacts with pheophytin a. Residues D170 and E189 each coordinate [CaMn4O5] cluster. The chain crosses the membrane as a helical span at residues 197–218 (FHMLGVAGVFGGSLFSAMHGSL). H198 contacts chlorophyll a. A quinone-binding positions include H215 and 264 to 265 (SF). H215 is a Fe cation binding site. H272 provides a ligand contact to Fe cation. The helical transmembrane segment at 274–288 (FLAAWPVVGIWFTAL) threads the bilayer. Residues H332, E333, D342, and A344 each coordinate [CaMn4O5] cluster. Positions 345–353 (SVEAPSVNG) are excised as a propeptide.

The protein belongs to the reaction center PufL/M/PsbA/D family. In terms of assembly, PSII is composed of 1 copy each of membrane proteins PsbA, PsbB, PsbC, PsbD, PsbE, PsbF, PsbH, PsbI, PsbJ, PsbK, PsbL, PsbM, PsbT, PsbX, PsbY, PsbZ, Psb30/Ycf12, at least 3 peripheral proteins of the oxygen-evolving complex and a large number of cofactors. It forms dimeric complexes. The D1/D2 heterodimer binds P680, chlorophylls that are the primary electron donor of PSII, and subsequent electron acceptors. It shares a non-heme iron and each subunit binds pheophytin, quinone, additional chlorophylls, carotenoids and lipids. D1 provides most of the ligands for the Mn4-Ca-O5 cluster of the oxygen-evolving complex (OEC). There is also a Cl(-1) ion associated with D1 and D2, which is required for oxygen evolution. The PSII complex binds additional chlorophylls, carotenoids and specific lipids. serves as cofactor. Post-translationally, tyr-161 forms a radical intermediate that is referred to as redox-active TyrZ, YZ or Y-Z. C-terminally processed by CTPA; processing is essential to allow assembly of the oxygen-evolving complex and thus photosynthetic growth.

The protein localises to the plastid. Its subcellular location is the chloroplast thylakoid membrane. The catalysed reaction is 2 a plastoquinone + 4 hnu + 2 H2O = 2 a plastoquinol + O2. Photosystem II (PSII) is a light-driven water:plastoquinone oxidoreductase that uses light energy to abstract electrons from H(2)O, generating O(2) and a proton gradient subsequently used for ATP formation. It consists of a core antenna complex that captures photons, and an electron transfer chain that converts photonic excitation into a charge separation. The D1/D2 (PsbA/PsbD) reaction center heterodimer binds P680, the primary electron donor of PSII as well as several subsequent electron acceptors. The chain is Photosystem II protein D1 from Chaetosphaeridium globosum (Charophycean green alga).